Consider the following 86-residue polypeptide: Exodeoxyribonuclease 7 small subunit (86 aa).

Positions 1–26 are disordered; it reads MQDELFETEKAPQKNAKNAKNAPKKS.

It belongs to the XseB family. As to quaternary structure, heterooligomer composed of large and small subunits.

The protein localises to the cytoplasm. It catalyses the reaction Exonucleolytic cleavage in either 5'- to 3'- or 3'- to 5'-direction to yield nucleoside 5'-phosphates.. Bidirectionally degrades single-stranded DNA into large acid-insoluble oligonucleotides, which are then degraded further into small acid-soluble oligonucleotides. This Helicobacter pylori (strain J99 / ATCC 700824) (Campylobacter pylori J99) protein is Exodeoxyribonuclease 7 small subunit.